The sequence spans 1138 residues: Trafficking protein particle complex subunit 9 (1138 aa).

A phosphoserine mark is found at serine 557 and serine 944.

The protein belongs to the NIBP family. Component of the multisubunit TRAPP (transport protein particle) complex, which includes at least TRAPPC2, TRAPPC2L, TRAPPC3, TRAPPC3L, TRAPPC4, TRAPPC5, TRAPPC8, TRAPPC9, TRAPPC10, TRAPPC11 and TRAPPC12. Directly interacts with IKBKB and MAP3K14.

It is found in the golgi apparatus. Its subcellular location is the cis-Golgi network. It localises to the endoplasmic reticulum. The protein resides in the cytoplasm. Functions as an activator of NF-kappa-B through increased phosphorylation of the IKK complex. May function in neuronal cells differentiation. May play a role in vesicular transport from endoplasmic reticulum to Golgi. In Bos taurus (Bovine), this protein is Trafficking protein particle complex subunit 9 (TRAPPC9).